The sequence spans 123 residues: uncharacterized protein (123 aa).

Residues 31 to 57 are compositionally biased toward basic and acidic residues; that stretch reads KLRTEAKKSKDKERTKEKEKHESLAKE. Residues 31-58 form a disordered region; it reads KLRTEAKKSKDKERTKEKEKHESLAKEK. The chain crosses the membrane as a helical span at residues 91–111; that stretch reads IIIFLLILLVSGLMVGIFFGI.

The protein resides in the membrane. This is an uncharacterized protein from Mycoplasma genitalium (strain ATCC 33530 / DSM 19775 / NCTC 10195 / G37) (Mycoplasmoides genitalium).